The primary structure comprises 891 residues: uncharacterized protein (891 aa).

Basic and acidic residues predominate over residues 48–64; it reads GHKKPRSESRKKYDAKK. The segment at 48–86 is disordered; the sequence is GHKKPRSESRKKYDAKKQHQSSHFATPVKGVESSEPTEK. Phosphoserine occurs at positions 261, 263, 265, and 268. Residues 795-822 form a disordered region; the sequence is QRTFSNESPRAVDSGFSRTSTPFSESTS. Residues 810-822 are compositionally biased toward polar residues; it reads FSRTSTPFSESTS.

The protein resides in the nucleus. This is an uncharacterized protein from Schizosaccharomyces pombe (strain 972 / ATCC 24843) (Fission yeast).